Consider the following 935-residue polypeptide: Intimin (935 aa).

A signal peptide spans Met-1–Gly-41. Residues Asn-40–Thr-153 are peptidoglycan-binding. A sufficient for homodimerization region spans residues Asn-40 to Thr-153. The required for periplasmic localization stretch occupies residues Asn-40 to Thr-212. The 50-residue stretch at Leu-63 to Leu-112 folds into the LysM domain. Residues Tyr-210–Phe-411 are inverse autotransporter. The interval Leu-402–Phe-411 is signature sequence for beta-barrel assembly machinery (BAM), which recognizes the unfolded beta-barrel in the periplasm. Big-1 domains lie at Val-560–Val-653 and Ile-660–Phe-754. One can recognise a BIG2 domain in the interval Gly-790–Ser-834. A disulfide bond links Cys-859 and Cys-933.

The protein belongs to the intimin/invasin family. Homodimer. Interacts with Tir.

Its subcellular location is the cell outer membrane. Functionally, an inverse autotransporter. Adhesin, which mediates attachment to the human intestine epithelial cells. Necessary for the production of attaching and effacing lesions on infected human tissue culture cells. Anchored to the outer membrane by binding to peptidoglycan (PGN) via its periplasmic domain, thus helping in receptor interactions during host invasion. PGN-binding may also aid in resisting mechanical and chemical stress during transit of the bacterium through the gastrointestinal tract of the host. In Escherichia coli O111:H-, this protein is Intimin (eae).